A 475-amino-acid chain; its full sequence is ADP-ribose glycohydrolase MACROD2 (475 aa).

The 182-residue stretch at 59–240 folds into the Macro domain; sequence QEAPQMKKSL…IYKKKMNEFF (182 aa). Substrate-binding positions include 77-79, 90-92, and 97-102; these read GDI, AAN, and GGGGVD. Lys170 participates in a covalent cross-link: Glycyl lysine isopeptide (Lys-Gly) (interchain with G-Cter in ubiquitin). Residues 185–191 and Phe224 each bind substrate; that span reads ISTGIYG. 2 disordered regions span residues 241–306 and 324–475; these read PVDD…SQEA and GVNT…EDLQ. Basic and acidic residues-rich tracts occupy residues 251 to 261 and 335 to 359; these read ADMKEDSEGPE and SEDKAEVHKDEDSAKDDNTVKDSDM. The segment covering 360–375 has biased composition (polar residues); it reads TNHSVCDQELPNGQEN. Basic and acidic residues predominate over residues 376-386; it reads DSAKSEGKTEA. 2 stretches are compositionally biased toward polar residues: residues 387-402 and 440-469; these read ESPSSSMETEDLSPNQ and SQGSSEAENTSGPDVDMNSQVDGVNEPTES.

It belongs to the MacroD-type family. MacroD1/2-like subfamily. Interacts with ADP-ribosylated PARP1. As to expression, expressed in the kidney.

The protein localises to the nucleus. It catalyses the reaction 2''-O-acetyl-ADP-D-ribose + H2O = ADP-D-ribose + acetate + H(+). The enzyme catalyses 4-O-(ADP-D-ribosyl)-L-aspartyl-[protein] + H2O = L-aspartyl-[protein] + ADP-D-ribose + H(+). It carries out the reaction 5-O-(ADP-D-ribosyl)-L-glutamyl-[protein] + H2O = L-glutamyl-[protein] + ADP-D-ribose + H(+). The catalysed reaction is alpha-NAD(+) + H2O = ADP-D-ribose + nicotinamide + H(+). With respect to regulation, subject to product inhibition by ADP-ribose. Removes ADP-ribose from aspartate and glutamate residues in proteins bearing a single ADP-ribose moiety. Inactive towards proteins bearing poly-ADP-ribose. Deacetylates O-acetyl-ADP ribose, a signaling molecule generated by the deacetylation of acetylated lysine residues in histones and other proteins. The sequence is that of ADP-ribose glycohydrolase MACROD2 from Mus musculus (Mouse).